The sequence spans 921 residues: Isoleucine--tRNA ligase 1 (921 aa).

Residues 57–67 carry the 'HIGH' region motif; sequence PYANGDIHMGH. An L-isoleucyl-5'-AMP-binding site is contributed by Glu552. The 'KMSKS' region signature appears at 593 to 597; it reads KMSKS. Lys596 contributes to the ATP binding site. Residues Cys888, Cys891, Cys908, and Cys911 each coordinate Zn(2+).

This sequence belongs to the class-I aminoacyl-tRNA synthetase family. IleS type 1 subfamily. Monomer. Zn(2+) serves as cofactor.

It localises to the cytoplasm. It carries out the reaction tRNA(Ile) + L-isoleucine + ATP = L-isoleucyl-tRNA(Ile) + AMP + diphosphate. Functionally, catalyzes the attachment of isoleucine to tRNA(Ile). As IleRS can inadvertently accommodate and process structurally similar amino acids such as valine, to avoid such errors it has two additional distinct tRNA(Ile)-dependent editing activities. One activity is designated as 'pretransfer' editing and involves the hydrolysis of activated Val-AMP. The other activity is designated 'posttransfer' editing and involves deacylation of mischarged Val-tRNA(Ile). In Bacillus thuringiensis subsp. konkukian (strain 97-27), this protein is Isoleucine--tRNA ligase 1.